A 133-amino-acid polypeptide reads, in one-letter code: Ribosome-binding factor A (133 aa).

Belongs to the RbfA family. Monomer. Binds 30S ribosomal subunits, but not 50S ribosomal subunits or 70S ribosomes.

It localises to the cytoplasm. Functionally, one of several proteins that assist in the late maturation steps of the functional core of the 30S ribosomal subunit. Associates with free 30S ribosomal subunits (but not with 30S subunits that are part of 70S ribosomes or polysomes). Required for efficient processing of 16S rRNA. May interact with the 5'-terminal helix region of 16S rRNA. In Synechocystis sp. (strain ATCC 27184 / PCC 6803 / Kazusa), this protein is Ribosome-binding factor A.